The sequence spans 819 residues: Tegument protein UL47 homolog (819 aa).

Residues 1–15 show a composition bias toward basic residues; it reads MQSGHYNRRQSRRQR. Disordered regions lie at residues 1 to 42 and 58 to 221; these read MQSG…THPP and LNSE…DYFS. The Nuclear localization signal motif lies at 11–31; the sequence is SRRQRISSNTTDSPRHTHGTR. Polar residues predominate over residues 32–42; it reads YRSTNWYTHPP. Positions 62–72 are enriched in acidic residues; it reads MDQDSSSDASD. The span at 82 to 93 shows a compositional bias: polar residues; that stretch reads STYNGSEQNTST. Residues 94–109 are compositionally biased toward basic and acidic residues; sequence SRHENRIFKLTEREAN. 5 consecutive repeat copies span residues 117-132, 133-148, 149-164, 165-190, and 191-206. Residues 117-218 are 6 X 16 AA approximate tandem repeats; sequence DAIDDEGEAE…IDDEGEAEED (102 aa). Positions 118-219 are enriched in acidic residues; sequence AIDDEGEAEE…DDEGEAEEDY (102 aa). The stretch at 207-218 is one 1-6; truncated repeat; that stretch reads DAIDDEGEAEED. The Nuclear export signal motif lies at 785 to 807; sequence QPIPSVDLAENLMQYRNEILGLD.

Belongs to the alphaherpesvirinae HHV-1 UL47 family. In terms of assembly, interacts with US3 kinase. Interacts with ORF24 and ORF27; these interactions seem important for efficient virion nuclear egress. Interacts with ORF17/VHS. Interacts with ORF9. Phosphorylated by US3. This phosphorylation is required for proper nuclear localization.

The protein localises to the virion tegument. It localises to the host nucleus. Its subcellular location is the host cytoplasm. Its function is as follows. Tegument protein that can bind to various RNA transcripts. Plays a role in the attenuation of selective viral and cellular mRNA degradation by modulating the activity of host shutoff RNase ORF17/VHS. Also plays a role in the primary envelopment of virions in the perinuclear space, probably by interacting with two nuclear egress proteins ORF24 and ORF27. The polypeptide is Tegument protein UL47 homolog (Varicella-zoster virus (strain Dumas) (HHV-3)).